A 511-amino-acid polypeptide reads, in one-letter code: Type 2 DNA topoisomerase 6 subunit B-like (511 aa).

The interval 398–485 is disordered; sequence DSAQGTEDAP…RALAPGRASL (88 aa). Positions 408–422 are enriched in polar residues; the sequence is DNSSLELLADTSGQA. The span at 440–451 shows a compositional bias: low complexity; sequence LRSARAPSPSEA. The span at 466–475 shows a compositional bias: basic and acidic residues; sequence RGREHREAHG.

This sequence belongs to the TOP6B-like family. Heterotetramer of SPO11 and 2 TOP6BL chains. Interacts with SPO11. As to expression, detected in lung, spleen,colon and in skeletal muscle. Expressed in the ovaries, Fallopian tubes and uterus.

Its subcellular location is the chromosome. Component of a topoisomerase 6 complex specifically required for meiotic recombination. Together with SPO11, mediates DNA cleavage that forms the double-strand breaks (DSB) that initiate meiotic recombination. The complex promotes relaxation of negative and positive supercoiled DNA and DNA decatenation through cleavage and ligation cycles. In Homo sapiens (Human), this protein is Type 2 DNA topoisomerase 6 subunit B-like.